Reading from the N-terminus, the 252-residue chain is Imidazole glycerol phosphate synthase subunit HisF (252 aa).

Active-site residues include Asp-11 and Asp-130.

It belongs to the HisA/HisF family. Heterodimer of HisH and HisF.

It localises to the cytoplasm. The enzyme catalyses 5-[(5-phospho-1-deoxy-D-ribulos-1-ylimino)methylamino]-1-(5-phospho-beta-D-ribosyl)imidazole-4-carboxamide + L-glutamine = D-erythro-1-(imidazol-4-yl)glycerol 3-phosphate + 5-amino-1-(5-phospho-beta-D-ribosyl)imidazole-4-carboxamide + L-glutamate + H(+). Its pathway is amino-acid biosynthesis; L-histidine biosynthesis; L-histidine from 5-phospho-alpha-D-ribose 1-diphosphate: step 5/9. Functionally, IGPS catalyzes the conversion of PRFAR and glutamine to IGP, AICAR and glutamate. The HisF subunit catalyzes the cyclization activity that produces IGP and AICAR from PRFAR using the ammonia provided by the HisH subunit. This Polynucleobacter asymbioticus (strain DSM 18221 / CIP 109841 / QLW-P1DMWA-1) (Polynucleobacter necessarius subsp. asymbioticus) protein is Imidazole glycerol phosphate synthase subunit HisF.